The sequence spans 354 residues: 3-isopropylmalate dehydrogenase (354 aa).

76-87 (GPRWDGAKERPE) contacts NAD(+). Arginine 94, arginine 104, arginine 130, and aspartate 215 together coordinate substrate. Aspartate 215, aspartate 239, and aspartate 243 together coordinate Mg(2+). 273-285 (GSAPDIAGKNKAN) serves as a coordination point for NAD(+).

It belongs to the isocitrate and isopropylmalate dehydrogenases family. LeuB type 1 subfamily. As to quaternary structure, homodimer. Requires Mg(2+) as cofactor. It depends on Mn(2+) as a cofactor.

The protein localises to the cytoplasm. It catalyses the reaction (2R,3S)-3-isopropylmalate + NAD(+) = 4-methyl-2-oxopentanoate + CO2 + NADH. It participates in amino-acid biosynthesis; L-leucine biosynthesis; L-leucine from 3-methyl-2-oxobutanoate: step 3/4. Its function is as follows. Catalyzes the oxidation of 3-carboxy-2-hydroxy-4-methylpentanoate (3-isopropylmalate) to 3-carboxy-4-methyl-2-oxopentanoate. The product decarboxylates to 4-methyl-2 oxopentanoate. The protein is 3-isopropylmalate dehydrogenase of Bacillus thuringiensis subsp. konkukian (strain 97-27).